The primary structure comprises 826 residues: DNA mismatch repair protein MutS (826 aa).

622-629 contacts ATP; the sequence is GPNMAGKS.

This sequence belongs to the DNA mismatch repair MutS family.

Its function is as follows. This protein is involved in the repair of mismatches in DNA. It is possible that it carries out the mismatch recognition step. This protein has a weak ATPase activity. The sequence is that of DNA mismatch repair protein MutS from Chlamydia abortus (strain DSM 27085 / S26/3) (Chlamydophila abortus).